The chain runs to 288 residues: ATP synthase gamma chain (288 aa).

It belongs to the ATPase gamma chain family. In terms of assembly, F-type ATPases have 2 components, CF(1) - the catalytic core - and CF(0) - the membrane proton channel. CF(1) has five subunits: alpha(3), beta(3), gamma(1), delta(1), epsilon(1). CF(0) has three main subunits: a, b and c.

It localises to the cell membrane. Its function is as follows. Produces ATP from ADP in the presence of a proton gradient across the membrane. The gamma chain is believed to be important in regulating ATPase activity and the flow of protons through the CF(0) complex. The polypeptide is ATP synthase gamma chain (Bacillus pumilus (strain SAFR-032)).